Here is a 226-residue protein sequence, read N- to C-terminus: Lysoplasmalogenase TMEM86B (226 aa).

Residues 1-23 (MDARKEGLPLETLFSDQYPQVRR) lie on the Cytoplasmic side of the membrane. A helical membrane pass occupies residues 24 to 40 (WLAPFILACSLYFLLWI). Residues 41–46 (PVDQPS) lie on the Extracellular side of the membrane. Residues 47-68 (WVSALIKCQPILCLVVFLWAVA) form a helical membrane-spanning segment. At 69–74 (PGGSST) the chain is on the cytoplasmic side. A helical membrane pass occupies residues 75–93 (WLLQGALVCSAVGDACLIW). Topologically, residues 94–99 (PEAFFY) are extracellular. Residues 100 to 117 (GTAAFSVAHLFYLGAFGL) traverse the membrane as a helical segment. The Cytoplasmic segment spans residues 118–123 (TPLQPG). A helical membrane pass occupies residues 124-140 (LLLCTTLASLTYYSFLL). Residues 141-146 (LHLEQG) are Extracellular-facing. The chain crosses the membrane as a helical span at residues 147-163 (MVLPVMAYGLILNSMLW). The Cytoplasmic segment spans residues 164–171 (RSLVWGGS). Residues 172–188 (ASWGAVLFTFSDGVLAW) traverse the membrane as a helical segment. The Extracellular segment spans residues 189–199 (DTFVYSLPFAR). Residues 200–218 (LVTMSTYYAAQLLLILSAL) traverse the membrane as a helical segment. Residues 219-226 (RNPGLKTH) are Cytoplasmic-facing.

It belongs to the TMEM86 family. Homodimer. Enriched in liver. Also detected in brain and testis.

The protein resides in the endoplasmic reticulum membrane. It localises to the cytoplasm. It catalyses the reaction a 1-O-(1Z-alkenyl)-sn-glycero-3-phosphocholine + H2O = a 2,3-saturated aldehyde + sn-glycerol 3-phosphocholine. The enzyme catalyses a 1-O-(1Z-alkenyl)-sn-glycero-3-phosphoethanolamine + H2O = a 2,3-saturated aldehyde + sn-glycero-3-phosphoethanolamine. With respect to regulation, competitively inhibited by lysophosphatidic acid. Its function is as follows. Catalyzes the hydrolysis of the vinyl ether bond of choline or ethanolamine lysoplasmalogens, forming fatty aldehyde and glycerophosphocholine or glycerophosphoethanolamine, respectively and is specific for the sn-2-deacylated (lyso) form of plasmalogen. The sequence is that of Lysoplasmalogenase TMEM86B (Tmem86b) from Mus musculus (Mouse).